The following is a 72-amino-acid chain: Translation initiation factor IF-1 (72 aa).

The S1-like domain occupies Met1–Lys72.

Belongs to the IF-1 family. Component of the 30S ribosomal translation pre-initiation complex which assembles on the 30S ribosome in the order IF-2 and IF-3, IF-1 and N-formylmethionyl-tRNA(fMet); mRNA recruitment can occur at any time during PIC assembly.

The protein localises to the cytoplasm. Functionally, one of the essential components for the initiation of protein synthesis. Stabilizes the binding of IF-2 and IF-3 on the 30S subunit to which N-formylmethionyl-tRNA(fMet) subsequently binds. Helps modulate mRNA selection, yielding the 30S pre-initiation complex (PIC). Upon addition of the 50S ribosomal subunit IF-1, IF-2 and IF-3 are released leaving the mature 70S translation initiation complex. This Geobacter sulfurreducens (strain ATCC 51573 / DSM 12127 / PCA) protein is Translation initiation factor IF-1.